An 85-amino-acid polypeptide reads, in one-letter code: MASPLSPGSRILIGLVRAYQLVISPLLGPRCRFQPTCSHYAIEALSRFGMIKGSWLALKRVLKCHPLNPGGDDPVPPKPDDNREH.

This sequence belongs to the UPF0161 family.

The protein resides in the cell inner membrane. Could be involved in insertion of integral membrane proteins into the membrane. The sequence is that of Putative membrane protein insertion efficiency factor from Serratia proteamaculans (strain 568).